Consider the following 302-residue polypeptide: Aspartate carbamoyltransferase catalytic subunit (302 aa).

The carbamoyl phosphate site is built by Arg-51 and Thr-52. Residue Lys-80 coordinates L-aspartate. Carbamoyl phosphate is bound by residues Arg-101, His-129, and Gln-132. L-aspartate contacts are provided by Arg-162 and Arg-224. Carbamoyl phosphate is bound by residues Leu-263 and Pro-264.

Belongs to the aspartate/ornithine carbamoyltransferase superfamily. ATCase family. Heterododecamer (2C3:3R2) of six catalytic PyrB chains organized as two trimers (C3), and six regulatory PyrI chains organized as three dimers (R2).

It catalyses the reaction carbamoyl phosphate + L-aspartate = N-carbamoyl-L-aspartate + phosphate + H(+). The protein operates within pyrimidine metabolism; UMP biosynthesis via de novo pathway; (S)-dihydroorotate from bicarbonate: step 2/3. Its function is as follows. Catalyzes the condensation of carbamoyl phosphate and aspartate to form carbamoyl aspartate and inorganic phosphate, the committed step in the de novo pyrimidine nucleotide biosynthesis pathway. The protein is Aspartate carbamoyltransferase catalytic subunit of Azobacteroides pseudotrichonymphae genomovar. CFP2.